The sequence spans 217 residues: Uracil-DNA glycosylase (217 aa).

The active-site Proton acceptor is the Asp-62.

Belongs to the uracil-DNA glycosylase (UDG) superfamily. UNG family.

It localises to the cytoplasm. It carries out the reaction Hydrolyzes single-stranded DNA or mismatched double-stranded DNA and polynucleotides, releasing free uracil.. Its function is as follows. Excises uracil residues from the DNA which can arise as a result of misincorporation of dUMP residues by DNA polymerase or due to deamination of cytosine. In Streptococcus pyogenes serotype M3 (strain ATCC BAA-595 / MGAS315), this protein is Uracil-DNA glycosylase.